We begin with the raw amino-acid sequence, 448 residues long: N-succinylarginine dihydrolase (448 aa).

Substrate-binding positions include 19–28, Asn110, and 137–138; these read GGLSYGNVAS and HR. Residue Glu174 is part of the active site. Arg214 lines the substrate pocket. The active site involves His250. Substrate-binding residues include Asp252 and Asn365. Cys371 serves as the catalytic Nucleophile.

It belongs to the succinylarginine dihydrolase family. As to quaternary structure, homodimer.

It catalyses the reaction N(2)-succinyl-L-arginine + 2 H2O + 2 H(+) = N(2)-succinyl-L-ornithine + 2 NH4(+) + CO2. Its pathway is amino-acid degradation; L-arginine degradation via AST pathway; L-glutamate and succinate from L-arginine: step 2/5. Catalyzes the hydrolysis of N(2)-succinylarginine into N(2)-succinylornithine, ammonia and CO(2). The protein is N-succinylarginine dihydrolase of Pseudomonas fluorescens (strain ATCC BAA-477 / NRRL B-23932 / Pf-5).